The chain runs to 125 residues: Actin, alpha skeletal muscle (125 aa).

The protein belongs to the actin family. As to quaternary structure, polymerization of globular actin (G-actin) leads to a structural filament (F-actin) in the form of a two-stranded helix. Each actin can bind to 4 others. Methylated at His-75 by SETD3.

The protein resides in the cytoplasm. It localises to the cytoskeleton. Its function is as follows. Actins are highly conserved proteins that are involved in various types of cell motility and are ubiquitously expressed in all eukaryotic cells. This is Actin, alpha skeletal muscle from Pleurodeles waltl (Iberian ribbed newt).